Reading from the N-terminus, the 189-residue chain is Orotate phosphoribosyltransferase (189 aa).

5-phospho-alpha-D-ribose 1-diphosphate-binding positions include arginine 99, lysine 100, lysine 103, histidine 105, and 126 to 134; that span reads EDVITTGGS. Residues threonine 130 and arginine 158 each contribute to the orotate site.

Belongs to the purine/pyrimidine phosphoribosyltransferase family. PyrE subfamily. In terms of assembly, homodimer. Requires Mg(2+) as cofactor.

It carries out the reaction orotidine 5'-phosphate + diphosphate = orotate + 5-phospho-alpha-D-ribose 1-diphosphate. It participates in pyrimidine metabolism; UMP biosynthesis via de novo pathway; UMP from orotate: step 1/2. Catalyzes the transfer of a ribosyl phosphate group from 5-phosphoribose 1-diphosphate to orotate, leading to the formation of orotidine monophosphate (OMP). This is Orotate phosphoribosyltransferase from Thermosynechococcus vestitus (strain NIES-2133 / IAM M-273 / BP-1).